The chain runs to 173 residues: MDYFTLLGMPNRFDIDKQQLASRYQEMQRQYHPDRFAGKSDKEQVQAISFASTINQAYQTLKNPLSRAEYMLSLQGIDIANEQQTMHDTAFLMEQLTLREELDDIEHSTDAENLLADFSARLEKMYTVRYDEMVKTLDSQTWDIAADNVRKLRFLAKLKEQVEHLEERLFDGF.

The J domain occupies 2–74 (DYFTLLGMPN…LSRAEYMLSL (73 aa)).

This sequence belongs to the HscB family. Interacts with HscA and stimulates its ATPase activity. Interacts with IscU.

Co-chaperone involved in the maturation of iron-sulfur cluster-containing proteins. Seems to help targeting proteins to be folded toward HscA. This Proteus mirabilis (strain HI4320) protein is Co-chaperone protein HscB.